The following is a 588-amino-acid chain: uncharacterized protein (588 aa).

7 consecutive transmembrane segments (helical) span residues 14 to 34 (FLLF…KGIV), 49 to 69 (AVIL…IVSA), 78 to 98 (IFLC…GILG), 184 to 204 (ALVV…LVAI), 235 to 255 (VPIA…AVIG), 257 to 274 (VISS…SYQE), and 275 to 292 (SSFY…SIYD). S486 is subject to Phosphoserine. The tract at residues 566-588 (RKGSVNGSDQESQKGVSRNVDIV) is disordered. A compositionally biased stretch (polar residues) spans 570 to 581 (VNGSDQESQKGV).

It is found in the membrane. This is an uncharacterized protein from Arabidopsis thaliana (Mouse-ear cress).